The sequence spans 20 residues: Flagellar filament 33 kDa core protein (20 aa).

This sequence belongs to the bacterial flagellin family. As to quaternary structure, the flagellum consists of an outer layer composed of repeating units of FlaA around a core that contains one or all of five antigenically related polypeptides.

The protein resides in the periplasmic flagellum. It localises to the periplasm. Component of the core of the flagella. The sequence is that of Flagellar filament 33 kDa core protein from Spirochaeta aurantia.